The chain runs to 195 residues: Fe/S biogenesis protein NfuA (195 aa).

[4Fe-4S] cluster is bound by residues Cys-152 and Cys-155.

This sequence belongs to the NfuA family. In terms of assembly, homodimer. [4Fe-4S] cluster serves as cofactor.

Involved in iron-sulfur cluster biogenesis. Binds a 4Fe-4S cluster, can transfer this cluster to apoproteins, and thereby intervenes in the maturation of Fe/S proteins. Could also act as a scaffold/chaperone for damaged Fe/S proteins. The sequence is that of Fe/S biogenesis protein NfuA from Vibrio cholerae serotype O1 (strain ATCC 39541 / Classical Ogawa 395 / O395).